We begin with the raw amino-acid sequence, 828 residues long: MGNPFEGWPVHDIVYTVIVGLVMLAAVLEWFLWVAAFMYCLVKVFIKAEHWTIRALAVVVAILFVGFRAVFLPIMVVTLPLPSAIVKLWPEDMVVGLQWFAFWAFAGLLTIPWLFCVYHFVTNQLGREKRVKQVLDEVSAPKVVIVMPCYKEDPEVLLVAMNSIVDCDYPPSCIHVFLSFDGDQVDELYLNTIETFGVPLTLDSYPKSIDVTYKAARITISRFPHGGKRHCQKATFKLIDKVYKEYLERNDNLFILFIDSDCILDRVCLQNFIYDMELSPGNSRDMLAMTGVITSTTKKHSLITVLQDLEYIHGQLFERTVESGCGAVTCLPGALTMLRFSAFRRMAKYYFADKAEQCEDLFDFAKCHLGEDRWLTHLFMIGAKKRYQIQMCTSAFCKTEAVQTMQSLVKQRRRWFLGFITNEVCMLTDWRLWTRYPLLVLIRFMQNTIRTTALLFFIMVLAILTTSKRVSDLPVGFIAISLGLNWLMMIYFGAKLRRFKIWLYPLMFVLNPFFNWWYMVYGIFTAGQRTWGGPRADAAAADGDTTAQQAIEAAEKAGDDLNIVPETFIPAAQIKRKESGRRRIVAGGNIQPSAKIDGMFAIPERGANGWYQHDNISLFTVAHGHTGRVPLHPRDSFDSFLSAQTALNSVYIPRRVESIMGDEDRRKYELAQASQFNQFLSNQRRSTNGEPPQGQVYEYSDVDLQKAGYTDNPLPPTPGETASAVPAALNLHHKVGSTDSLVSLGSSASNSNQRDRGRQRTLMPPTSSQARTGRSPLGRASFLRTSTIEDIELEIGTSHGSSANRPALSRQASNNDPNNSNSGGHQQR.

A run of 6 helical transmembrane segments spans residues 17-37 (VIVG…VAAF), 57-77 (AVVV…IMVV), 95-115 (VGLQ…PWLF), 444-464 (FMQN…LAIL), 473-493 (LPVG…IYFG), and 501-521 (IWLY…YMVY). An N-linked (GlcNAc...) asparagine glycan is attached at N615. 2 stretches are compositionally biased toward low complexity: residues 740 to 752 (SLVS…SNSN) and 813 to 822 (SNNDPNNSNS). Disordered regions lie at residues 740 to 780 (SLVS…LGRA) and 793 to 828 (LEIG…HQQR). N818 is a glycosylation site (N-linked (GlcNAc...) asparagine).

It belongs to the chitin synthase family. Class VII subfamily.

Its subcellular location is the membrane. It catalyses the reaction [(1-&gt;4)-N-acetyl-beta-D-glucosaminyl](n) + UDP-N-acetyl-alpha-D-glucosamine = [(1-&gt;4)-N-acetyl-beta-D-glucosaminyl](n+1) + UDP + H(+). Polymerizes chitin, a structural polymer of the cell wall and septum, by transferring the sugar moiety of UDP-GlcNAc to the non-reducing end of the growing chitin polymer. Required for normal appressorial chitin content and for the normal formation and function of these infection structures. This is Chitin synthase 7 from Pyricularia oryzae (strain 70-15 / ATCC MYA-4617 / FGSC 8958) (Rice blast fungus).